The sequence spans 112 residues: Nitrogen regulatory protein P-II (112 aa).

Tyr51 is subject to O-UMP-tyrosine.

It belongs to the P(II) protein family. In terms of assembly, homotrimer.

In terms of biological role, P-II indirectly controls the transcription of the glutamine synthetase gene (glnA). P-II prevents NR-II-catalyzed conversion of NR-I to NR-I-phosphate, the transcriptional activator of glnA. When P-II is uridylylated to P-II-UMP, these events are reversed. When the ratio of Gln to 2-ketoglutarate decreases, P-II is uridylylated to P-II-UMP, which causes the deadenylation of glutamine synthetase, so activating the enzyme. The chain is Nitrogen regulatory protein P-II (glnB) from Rhodobacter capsulatus (Rhodopseudomonas capsulata).